The chain runs to 707 residues: DNA-binding protein RFX2 (707 aa).

Residue S33 is modified to Phosphoserine. Positions H204–P279 form a DNA-binding region, RFX-type winged-helix. A disordered region spans residues Q297–Q337. The segment covering L315–Q337 has biased composition (low complexity). Residue S420 is modified to Phosphoserine.

Belongs to the RFX family. As to quaternary structure, homodimer; probably only forms homodimers in testis. Heterodimer; heterodimerizes with RFX1 and RFX3.

It localises to the nucleus. The protein localises to the cytoplasm. In terms of biological role, transcription factor that acts as a key regulator of spermatogenesis. Acts by regulating expression of genes required for the haploid phase during spermiogenesis, such as genes required for cilium assembly and function. Recognizes and binds the X-box, a regulatory motif with DNA sequence 5'-GTNRCC(0-3N)RGYAAC-3' present on promoters. Probably activates transcription of the testis-specific histone gene H1-6. The chain is DNA-binding protein RFX2 (RFX2) from Bos taurus (Bovine).